A 558-amino-acid polypeptide reads, in one-letter code: Atlastin-1 (558 aa).

The disordered stretch occupies residues 1–27 (MAKNRRDRNSWGGFSEKTYEWSSEEEE). Residues 1–34 (MAKNRRDRNSWGGFSEKTYEWSSEEEEPVKKAGP) are N-terminal hypervariable region (HVR). Residues 1-449 (MAKNRRDRNS…NIFHAARTPA (449 aa)) are Cytoplasmic-facing. Phosphoserine occurs at positions 10, 22, and 23. One can recognise a GB1/RHD3-type G domain in the interval 64–309 (DKEVVAVSVA…LIPWLLSPES (246 aa)). Arginine 77, lysine 78, glycine 79, lysine 80, serine 81, phenylalanine 82, glutamine 148, arginine 217, aspartate 218, valine 276, and asparagine 279 together coordinate GDP. GTP is bound by residues arginine 77, lysine 78, glycine 79, lysine 80, serine 81, and phenylalanine 82. A Mg(2+)-binding site is contributed by serine 81. GTP is bound by residues arginine 217, aspartate 218, and valine 276. The segment at 347–438 (MLQATAEANN…YIQYIKHNDS (92 aa)) is 3HB (three-helix bundle) domain. Residue lysine 395 is modified to N6-acetyllysine. Residues 412-439 (EFSRRYLQQLESEIDELYIQYIKHNDSK) are a coiled coil. Residues 439-447 (KNIFHAART) form a linker region. The chain crosses the membrane as a helical span at residues 450–470 (TLFVVIFITYVIAGVTGFIGL). Position 471 (aspartate 471) is a topological domain, lumenal. Residues 472 to 492 (IIASLCNMIMGLTLITLCTWA) traverse the membrane as a helical segment. Residues 493-558 (YIRYSGEYRE…STEQSEKKKM (66 aa)) lie on the Cytoplasmic side of the membrane. The autoinhibitory domain stretch occupies residues 521–558 (NEALYKLYSAAATHRHLYHQAFPTPKSESTEQSEKKKM).

Belongs to the TRAFAC class dynamin-like GTPase superfamily. GB1/RHD3 GTPase family. GB1 subfamily. As to quaternary structure, monomeric and homodimeric. The homodimer, transiently formed by two molecules on opposing membranes, is the active form mediating ER membrane fusion. Interacts with REEP1, REEP5, RTN3 and RTN4 (via the transmembrane region); these proteins are involved in endoplasmic reticulum tubular network organization. Interacts with ZFYVE27; both proteins are involved in endoplasmic reticulum tubular network organization. Interacts with ARL6IP1; both proteins are involved in endoplasmic reticulum tubular network organization. Interacts with SPAST; the interaction is direct, could recruit SPAST to Golgi membranes. Interacts (via N-terminal region) with MAP4K4 (via CNH regulatory domain). May interact with TMED2. Interacts with CPT1C. Post-translationally, phosphorylated. Phosphorylation, by different kinases, of the N-terminal hypervariable region (HVR) regulates the ATL1-mediated membrane tethering step.

It localises to the endoplasmic reticulum membrane. The protein resides in the golgi apparatus membrane. The protein localises to the cell projection. Its subcellular location is the axon. It carries out the reaction GTP + H2O = GDP + phosphate + H(+). In terms of biological role, atlastin-1 (ATL1) is a membrane-anchored GTPase that mediates the GTP-dependent fusion of endoplasmic reticulum (ER) membranes, maintaining the continuous ER network. It facilitates the formation of three-way junctions where ER tubules intersect. Two atlastin-1 on neighboring ER tubules bind GTP and form loose homodimers through the GB1/RHD3-type G domains and 3HB regions. Upon GTP hydrolysis, the 3HB regions tighten, pulling the membranes together to drive their fusion. After fusion, the homodimer disassembles upon release of inorganic phosphate (Pi). Subsequently, GDP dissociates, resetting the monomers to a conformation ready for a new fusion cycle. May also regulate more or less directly Golgi biogenesis. Indirectly regulates axonal development. The protein is Atlastin-1 of Macaca fascicularis (Crab-eating macaque).